Consider the following 413-residue polypeptide: PCI domain-containing protein 2 homolog (413 aa).

The PCI domain occupies 222–403; it reads VAYNYFLGRK…QKLVISKMNA (182 aa).

The protein belongs to the CSN12 family.

This is PCI domain-containing protein 2 homolog from Caenorhabditis elegans.